The primary structure comprises 159 residues: Transcriptional repressor NrdR (159 aa).

Polar residues predominate over residues 1-11 (MQCPTCQNTDS). The segment at 1–21 (MQCPTCQNTDSRVLESRSADS) is disordered. A zinc finger spans residues 3–34 (CPTCQNTDSRVLESRSADSGKSVRRRRECLNC). The ATP-cone domain maps to 49–139 (VSVLKKDGGR…VYRKFNGVKD (91 aa)).

Belongs to the NrdR family. Zn(2+) is required as a cofactor.

In terms of biological role, negatively regulates transcription of bacterial ribonucleotide reductase nrd genes and operons by binding to NrdR-boxes. This Prochlorococcus marinus (strain AS9601) protein is Transcriptional repressor NrdR.